We begin with the raw amino-acid sequence, 661 residues long: Glycogen debranching enzyme (661 aa).

The active-site Nucleophile is aspartate 338. Residue glutamate 373 is the Proton donor of the active site. The tract at residues 460-481 (NQLNGEGNRDGSDRNFSNNHGV) is disordered.

Belongs to the glycosyl hydrolase 13 family.

The enzyme catalyses Hydrolysis of (1-&gt;6)-alpha-D-glucosidic linkages to branches with degrees of polymerization of three or four glucose residues in limit dextrin.. The protein operates within glycan degradation; glycogen degradation. Its function is as follows. Removes maltotriose and maltotetraose chains that are attached by 1,6-alpha-linkage to the limit dextrin main chain, generating a debranched limit dextrin. In Serratia proteamaculans (strain 568), this protein is Glycogen debranching enzyme.